A 1324-amino-acid polypeptide reads, in one-letter code: Synaptojanin-1 (1324 aa).

One can recognise an SAC domain in the interval 119 to 442 (VRKVLNSGNF…GDSISKIYAG (324 aa)). A catalytic region spans residues 475-859 (AIDVLLLGNT…GRAELKTSDH (385 aa)). Phosphoserine is present on residues S820 and S830. Residues 902-971 (SSLPENNFFN…RTITITLKSP (70 aa)) enclose the RRM domain. Residues 1030-1324 (LQPSSSSALA…SDPFEDLSLN (295 aa)) are disordered. Polar residues predominate over residues 1080–1103 (ASQSSPVDTLPATQLQQKDSSQTL). A compositionally biased stretch (pro residues) spans 1108 to 1130 (PPPPRPVAPPARPAPPQRPPPPS). Residues 1138–1156 (ARERVWSTRKAQERPRRDN) show a composition bias toward basic and acidic residues. R1186 carries the omega-N-methylarginine modification. Phosphothreonine is present on T1205. Residue S1277 is modified to Phosphoserine. Over residues 1278–1292 (SHSLPSDAPAAAAGA) the composition is skewed to low complexity.

The protein belongs to the synaptojanin family. In the central section; belongs to the inositol 1,4,5-trisphosphate 5-phosphatase family. As to quaternary structure, interacts with ASH/GRB2. Interacts with PACSIN1, PACSIN2 and PACSIN3. Interacts with AMPH, SH3GL1, SH3GL2 and SH3GL3. Interacts with MYO1E (via SH3 domain). Interacts with BIN1 and DNM1. Interacts with EPS15. Ubiquitously expressed with highest levels in brain.

It localises to the cytoplasm. The protein resides in the perinuclear region. It carries out the reaction a 1,2-diacyl-sn-glycero-3-phospho-(1D-myo-inositol-4,5-bisphosphate) + H2O = a 1,2-diacyl-sn-glycero-3-phospho-(1D-myo-inositol 4-phosphate) + phosphate. In terms of biological role, phosphatase that acts on various phosphoinositides, including phosphatidylinositol 4-phosphate, phosphatidylinositol (4,5)-bisphosphate and phosphatidylinositol (3,4,5)-trisphosphate. Has a role in clathrin-mediated endocytosis. Hydrolyzes PIP2 bound to actin regulatory proteins resulting in the rearrangement of actin filaments downstream of tyrosine kinase and ASH/GRB2. The polypeptide is Synaptojanin-1 (SYNJ1) (Bos taurus (Bovine)).